The primary structure comprises 356 residues: MSKEPIIKLDNIDVTFHQKKREINAVKDVTIHINQGDIYGIVGYSGAGKSTLVRVINLLQEPSAGKITIDDQVIYDNKVTLTSTQLREQRREIGMIFQHFNLMSQLTAEQNVAFALKHSGLSKEAKAAKVAKLLELVGLSDRAQNYPSQLSGGQKQRVAIARALANDPKILISDESTSALDPKTTKQILALLQDLNKKLGLTIVLITHEMQIVKDIANRVAVMQNGKLIEEGSVLDIFSHPRESLTQDFIKIATGIDEAMLKIEQQEVVKNLPVGSKLVQLKYAGHSTDEPLLNQIYKEFEVTANILYGNIEILDGIPVGEMVVILSGDEEKLRQACQAITDSQVQLTLLKEGGKA.

In terms of domain architecture, ABC transporter spans 7-250 (IKLDNIDVTF…PRESLTQDFI (244 aa)). Residue 43–50 (GYSGAGKS) coordinates ATP.

The protein belongs to the ABC transporter superfamily. Methionine importer (TC 3.A.1.24) family. The complex is composed of two ATP-binding proteins (MetN), two transmembrane proteins (MetI) and a solute-binding protein (MetQ).

The protein resides in the cell membrane. It catalyses the reaction L-methionine(out) + ATP + H2O = L-methionine(in) + ADP + phosphate + H(+). It carries out the reaction D-methionine(out) + ATP + H2O = D-methionine(in) + ADP + phosphate + H(+). In terms of biological role, part of the ABC transporter complex MetNIQ involved in methionine import. Responsible for energy coupling to the transport system. In Streptococcus agalactiae serotype Ia (strain ATCC 27591 / A909 / CDC SS700), this protein is Methionine import ATP-binding protein MetN.